A 153-amino-acid polypeptide reads, in one-letter code: Cytochrome c-type biogenesis protein CcmE (153 aa).

Residues 1 to 7 (MTRKKRR) are Cytoplasmic-facing. A helical; Signal-anchor for type II membrane protein transmembrane segment spans residues 8 to 28 (LYFVVLGMLALFAAAGLTLTA). Topologically, residues 29–153 (FQDNLVFFYS…PPTAAAAPAP (125 aa)) are periplasmic. Heme is bound by residues His-121 and Tyr-125. The interval 132-153 (ESLKASGKWQHGPPTAAAAPAP) is disordered. Residues 144–153 (PPTAAAAPAP) are compositionally biased toward low complexity.

This sequence belongs to the CcmE/CycJ family.

The protein resides in the cell inner membrane. Its function is as follows. Heme chaperone required for the biogenesis of c-type cytochromes. Transiently binds heme delivered by CcmC and transfers the heme to apo-cytochromes in a process facilitated by CcmF and CcmH. In Rhodospirillum rubrum (strain ATCC 11170 / ATH 1.1.1 / DSM 467 / LMG 4362 / NCIMB 8255 / S1), this protein is Cytochrome c-type biogenesis protein CcmE.